A 512-amino-acid chain; its full sequence is Cytochrome P450 26B1 (512 aa).

Position 441 (Cys441) interacts with heme.

This sequence belongs to the cytochrome P450 family. Heme is required as a cofactor.

It is found in the endoplasmic reticulum membrane. Its subcellular location is the microsome membrane. It catalyses the reaction all-trans-retinoate + reduced [NADPH--hemoprotein reductase] + O2 = all-trans-4-hydroxyretinoate + oxidized [NADPH--hemoprotein reductase] + H2O + H(+). The catalysed reaction is all-trans-retinoate + reduced [NADPH--hemoprotein reductase] + O2 = all-trans-18-hydroxyretinoate + oxidized [NADPH--hemoprotein reductase] + H2O + H(+). A cytochrome P450 monooxygenase involved in the metabolism of retinoates (RAs), the active metabolites of vitamin A, and critical signaling molecules in animals. RAs exist as at least four different isomers: all-trans-RA (atRA), 9-cis-RA, 13-cis-RA, and 9,13-dicis-RA, where atRA is considered to be the biologically active isomer, although 9-cis-RA and 13-cis-RA also have activity. Catalyzes the hydroxylation of atRA primarily at C-4 and C-18, thereby contributing to the regulation of atRA homeostasis and signaling. Hydroxylation of atRA limits its biological activity and initiates a degradative process leading to its eventual elimination. Involved in the convertion of atRA to all-trans-4-oxo-RA. Can oxidize all-trans-13,14-dihydroretinoate (DRA) to metabolites which could include all-trans-4-oxo-DRA, all-trans-4-hydroxy-DRA, all-trans-5,8-epoxy-DRA, and all-trans-18-hydroxy-DRA. Shows preference for the following substrates: atRA &gt; 9-cis-RA &gt; 13-cis-RA. Plays a central role in germ cell development: acts by degrading RAs in the developing testis, preventing STRA8 expression, thereby leading to delay of meiosis. Required for the maintenance of the undifferentiated state of male germ cells during embryonic development in Sertoli cells, inducing arrest in G0 phase of the cell cycle and preventing meiotic entry. Plays a role in skeletal development, both at the level of patterning and in the ossification of bone and the establishment of some synovial joints. Essential for postnatal survival. Functionally, also has a significant activity in oxidation of tazarotenic acid and may therefore metabolize that xenobiotic in vivo. The polypeptide is Cytochrome P450 26B1 (Cyp26b1) (Rattus norvegicus (Rat)).